The primary structure comprises 286 residues: Bifunctional protein FolD (286 aa).

NADP(+) is bound by residues 164–166, Ser-193, and Ile-234; that span reads GRS.

Belongs to the tetrahydrofolate dehydrogenase/cyclohydrolase family. Homodimer.

It catalyses the reaction (6R)-5,10-methylene-5,6,7,8-tetrahydrofolate + NADP(+) = (6R)-5,10-methenyltetrahydrofolate + NADPH. The enzyme catalyses (6R)-5,10-methenyltetrahydrofolate + H2O = (6R)-10-formyltetrahydrofolate + H(+). The protein operates within one-carbon metabolism; tetrahydrofolate interconversion. Functionally, catalyzes the oxidation of 5,10-methylenetetrahydrofolate to 5,10-methenyltetrahydrofolate and then the hydrolysis of 5,10-methenyltetrahydrofolate to 10-formyltetrahydrofolate. This chain is Bifunctional protein FolD, found in Oleidesulfovibrio alaskensis (strain ATCC BAA-1058 / DSM 17464 / G20) (Desulfovibrio alaskensis).